We begin with the raw amino-acid sequence, 429 residues long: Enolase (429 aa).

Q162 provides a ligand contact to (2R)-2-phosphoglycerate. E204 functions as the Proton donor in the catalytic mechanism. Positions 241, 283, and 310 each coordinate Mg(2+). 4 residues coordinate (2R)-2-phosphoglycerate: K335, R364, S365, and K386. K335 acts as the Proton acceptor in catalysis.

The protein belongs to the enolase family. The cofactor is Mg(2+).

The protein resides in the cytoplasm. It localises to the secreted. It is found in the cell surface. It carries out the reaction (2R)-2-phosphoglycerate = phosphoenolpyruvate + H2O. It functions in the pathway carbohydrate degradation; glycolysis; pyruvate from D-glyceraldehyde 3-phosphate: step 4/5. Functionally, catalyzes the reversible conversion of 2-phosphoglycerate (2-PG) into phosphoenolpyruvate (PEP). It is essential for the degradation of carbohydrates via glycolysis. The chain is Enolase from Mycolicibacterium vanbaalenii (strain DSM 7251 / JCM 13017 / BCRC 16820 / KCTC 9966 / NRRL B-24157 / PYR-1) (Mycobacterium vanbaalenii).